The primary structure comprises 854 residues: Protein mono-ADP-ribosyltransferase PARP8 (854 aa).

2 disordered regions span residues 113 to 138 (NGEE…EFYY) and 291 to 310 (SYPP…EQDG). The span at 123 to 135 (VEEDSEGDNDSEE) shows a compositional bias: acidic residues. 4 positions are modified to ADP-ribosylcysteine: Cys-332, Cys-367, Cys-376, and Cys-395. The region spanning 617–844 (EMTQAPYLEI…QEGGIHKEIL (228 aa)) is the PARP catalytic domain. Residues 750–777 (QKVSAKDEPASSSKSSNTSQSQKKGQQS) are disordered. Over residues 760–777 (SSSKSSNTSQSQKKGQQS) the composition is skewed to low complexity.

This sequence belongs to the ARTD/PARP family. Post-translationally, auto-mono-ADP-ribosylated.

It catalyses the reaction L-cysteinyl-[protein] + NAD(+) = S-(ADP-D-ribosyl)-L-cysteinyl-[protein] + nicotinamide + H(+). In terms of biological role, mono-ADP-ribosyltransferase that mediates mono-ADP-ribosylation of target proteins. The polypeptide is Protein mono-ADP-ribosyltransferase PARP8 (Homo sapiens (Human)).